Reading from the N-terminus, the 279-residue chain is 3-methyl-2-oxobutanoate hydroxymethyltransferase (279 aa).

Residues Asp-49 and Asp-88 each contribute to the Mg(2+) site. Residues 49–50 (DS), Asp-88, and Lys-118 contribute to the 3-methyl-2-oxobutanoate site. Position 120 (Glu-120) interacts with Mg(2+). The Proton acceptor role is filled by Glu-187.

This sequence belongs to the PanB family. In terms of assembly, homodecamer; pentamer of dimers. The cofactor is Mg(2+).

The protein localises to the cytoplasm. It catalyses the reaction 3-methyl-2-oxobutanoate + (6R)-5,10-methylene-5,6,7,8-tetrahydrofolate + H2O = 2-dehydropantoate + (6S)-5,6,7,8-tetrahydrofolate. It participates in cofactor biosynthesis; (R)-pantothenate biosynthesis; (R)-pantoate from 3-methyl-2-oxobutanoate: step 1/2. Its function is as follows. Catalyzes the reversible reaction in which hydroxymethyl group from 5,10-methylenetetrahydrofolate is transferred onto alpha-ketoisovalerate to form ketopantoate. In Agrobacterium fabrum (strain C58 / ATCC 33970) (Agrobacterium tumefaciens (strain C58)), this protein is 3-methyl-2-oxobutanoate hydroxymethyltransferase.